The primary structure comprises 329 residues: Ketol-acid reductoisomerase (NADP(+)) (329 aa).

Residues 1 to 181 enclose the KARI N-terminal Rossmann domain; it reads MKIYYDQDAD…GGTRGGVLTT (181 aa). NADP(+) contacts are provided by residues 24 to 27, arginine 47, and 82 to 85; these read YGSQ and DQHQ. The active site involves histidine 107. Residue glycine 133 participates in NADP(+) binding. The KARI C-terminal knotted domain maps to 182 to 327; it reads TFKEETETDL…AKLRGMMSWL (146 aa). Mg(2+) is bound by residues aspartate 190, glutamate 194, glutamate 226, and glutamate 230. Position 251 (serine 251) interacts with substrate.

It belongs to the ketol-acid reductoisomerase family. It depends on Mg(2+) as a cofactor.

The enzyme catalyses (2R)-2,3-dihydroxy-3-methylbutanoate + NADP(+) = (2S)-2-acetolactate + NADPH + H(+). It catalyses the reaction (2R,3R)-2,3-dihydroxy-3-methylpentanoate + NADP(+) = (S)-2-ethyl-2-hydroxy-3-oxobutanoate + NADPH + H(+). Its pathway is amino-acid biosynthesis; L-isoleucine biosynthesis; L-isoleucine from 2-oxobutanoate: step 2/4. It functions in the pathway amino-acid biosynthesis; L-valine biosynthesis; L-valine from pyruvate: step 2/4. Its function is as follows. Involved in the biosynthesis of branched-chain amino acids (BCAA). Catalyzes an alkyl-migration followed by a ketol-acid reduction of (S)-2-acetolactate (S2AL) to yield (R)-2,3-dihydroxy-isovalerate. In the isomerase reaction, S2AL is rearranged via a Mg-dependent methyl migration to produce 3-hydroxy-3-methyl-2-ketobutyrate (HMKB). In the reductase reaction, this 2-ketoacid undergoes a metal-dependent reduction by NADPH to yield (R)-2,3-dihydroxy-isovalerate. This Solidesulfovibrio magneticus (strain ATCC 700980 / DSM 13731 / RS-1) (Desulfovibrio magneticus) protein is Ketol-acid reductoisomerase (NADP(+)).